The sequence spans 198 residues: tRNA (pseudouridine(54)-N(1))-methyltransferase (198 aa).

Position 128 (Leu128) interacts with S-adenosyl-L-methionine.

It belongs to the methyltransferase superfamily. TrmY family. As to quaternary structure, homodimer.

It localises to the cytoplasm. It catalyses the reaction pseudouridine(54) in tRNA + S-adenosyl-L-methionine = N(1)-methylpseudouridine(54) in tRNA + S-adenosyl-L-homocysteine + H(+). In terms of biological role, specifically catalyzes the N1-methylation of pseudouridine at position 54 (Psi54) in tRNAs. This is tRNA (pseudouridine(54)-N(1))-methyltransferase from Haloferax volcanii (strain ATCC 29605 / DSM 3757 / JCM 8879 / NBRC 14742 / NCIMB 2012 / VKM B-1768 / DS2) (Halobacterium volcanii).